A 430-amino-acid polypeptide reads, in one-letter code: tRNA(Ile)-lysidine synthase (430 aa).

27 to 32 (SGGSDS) lines the ATP pocket.

Belongs to the tRNA(Ile)-lysidine synthase family.

The protein resides in the cytoplasm. The catalysed reaction is cytidine(34) in tRNA(Ile2) + L-lysine + ATP = lysidine(34) in tRNA(Ile2) + AMP + diphosphate + H(+). Ligates lysine onto the cytidine present at position 34 of the AUA codon-specific tRNA(Ile) that contains the anticodon CAU, in an ATP-dependent manner. Cytidine is converted to lysidine, thus changing the amino acid specificity of the tRNA from methionine to isoleucine. This is tRNA(Ile)-lysidine synthase from Rickettsia bellii (strain OSU 85-389).